A 1403-amino-acid chain; its full sequence is DNA-directed RNA polymerase subunit beta' (1403 aa).

Residues C70, C72, C85, and C88 each contribute to the Zn(2+) site. Mg(2+) contacts are provided by D461, D463, and D465. Zn(2+) contacts are provided by C816, C890, C897, and C900.

This sequence belongs to the RNA polymerase beta' chain family. The RNAP catalytic core consists of 2 alpha, 1 beta, 1 beta' and 1 omega subunit. When a sigma factor is associated with the core the holoenzyme is formed, which can initiate transcription. Mg(2+) is required as a cofactor. The cofactor is Zn(2+).

The catalysed reaction is RNA(n) + a ribonucleoside 5'-triphosphate = RNA(n+1) + diphosphate. Its function is as follows. DNA-dependent RNA polymerase catalyzes the transcription of DNA into RNA using the four ribonucleoside triphosphates as substrates. In Dechloromonas aromatica (strain RCB), this protein is DNA-directed RNA polymerase subunit beta'.